A 414-amino-acid polypeptide reads, in one-letter code: Probable cell wall biosynthesis protein LcpB (414 aa).

The tract at residues 1–108 is disordered; that stretch reads MDSPGQGEIA…PPVIAGDGGR (108 aa). At 1–120 the chain is on the cytoplasmic side; that stretch reads MDSPGQGEIA…KAISFKPRGC (120 aa). Residues 9–23 show a composition bias toward basic and acidic residues; the sequence is IARDSQGRPILDRYG. The span at 33–42 shows a compositional bias: pro residues; it reads RQTPPTPRTP. The span at 43–53 shows a compositional bias: low complexity; sequence PVNETRVYQPR. Residues 54–80 are compositionally biased toward pro residues; that stretch reads QTPPRQTPPRQTPPRQMPPRQTPPRQV. The chain crosses the membrane as a helical span at residues 121 to 141; the sequence is LGTIAGVLAVGLVLVFVVTLW. Residues 142–414 are Periplasmic-facing; that stretch reads ADSKLNRVDA…GAEALFSSMR (273 aa).

The protein belongs to the LytR/CpsA/Psr (LCP) family.

It localises to the cell inner membrane. In Corynebacterium glutamicum (strain ATCC 13032 / DSM 20300 / JCM 1318 / BCRC 11384 / CCUG 27702 / LMG 3730 / NBRC 12168 / NCIMB 10025 / NRRL B-2784 / 534), this protein is Probable cell wall biosynthesis protein LcpB.